We begin with the raw amino-acid sequence, 303 residues long: Dehydrodolichyl diphosphate synthase 1 (303 aa).

A helical transmembrane segment spans residues 14–34 (LLFLFLIPCLFITSYIGFPVF).

Belongs to the UPP synthase family. The cofactor is Mg(2+). Expressed in low levels in the whole plant. Preferentially expressed in roots.

It localises to the endoplasmic reticulum membrane. It carries out the reaction n isopentenyl diphosphate + (2E,6E)-farnesyl diphosphate = a di-trans,poly-cis-polyprenyl diphosphate + n diphosphate. Its pathway is protein modification; protein glycosylation. In terms of biological role, catalyzes cis-prenyl chain elongation to produce the polyprenyl backbone of dolichol, a glycosyl carrier-lipid required for the biosynthesis of several classes of glycoprotein. The protein is Dehydrodolichyl diphosphate synthase 1 (DPS) of Arabidopsis thaliana (Mouse-ear cress).